Here is a 443-residue protein sequence, read N- to C-terminus: Aspartic protease PEP3 (443 aa).

The N-terminal stretch at 1–36 (MQNRPRVFDSAMNLSPNMHFLSLMPGLLLLSLQVHT) is a signal peptide. A propeptide spans 37 to 107 (SPTPLKKTIR…NTVSKAMQAN (71 aa)) (activation peptide). Residues 123 to 440 (YLSPVTIGGQ…DLRGPSLHVA (318 aa)) form the Peptidase A1 domain. The active site involves Asp-139. 2 N-linked (GlcNAc...) asparagine glycosylation sites follow: Asn-180 and Asn-293. Asp-327 is an active-site residue. Cys-363 and Cys-403 are oxidised to a cystine. N-linked (GlcNAc...) asparagine glycans are attached at residues Asn-364 and Asn-388.

Belongs to the peptidase A1 family. Monomer.

The protein localises to the secreted. Secreted aspartic endopeptidase that allows assimilation of proteinaceous substrates. The scissile peptide bond is attacked by a nucleophilic water molecule activated by two aspartic residues in the active site. Shows a broad primary substrate specificity. Favors hydrophobic residues at the P1 and P1' positions. This Coccidioides posadasii (strain C735) (Valley fever fungus) protein is Aspartic protease PEP3.